The chain runs to 535 residues: Growth-regulating factor 2 (535 aa).

One can recognise a QLQ domain in the interval 164 to 199 (PFTLTQWAELEQQALIYKYITANVPVPSSLLISIKK). In terms of domain architecture, WRC spans 227–271 (DPEPGRCRRTDGKKWRCSRDAVPDQKYCERHINRGRHRSRKPVEV). 2 short sequence motifs (bipartite nuclear localization signal) span residues 232-242 (RCRRTDGKKWR) and 260-267 (RGRHRSRK). Disordered regions lie at residues 260–308 (RGRH…ASSN), 417–437 (PIAS…EKTT), and 514–535 (SSVS…HYTT). Polar residues predominate over residues 272–291 (QSGQNQTAAAASKAVTTPQQ). Residues 299 to 308 (NRSNARASSN) are compositionally biased toward low complexity. Positions 426–437 (THNNNNAQEKTT) are enriched in polar residues.

The protein belongs to the GRF family. As to quaternary structure, interacts with GIF1. In terms of tissue distribution, strongly expressed in actively growing and developing tissues, such as roots, upper stems, and shoot tips containing the shoot apical meristem (SAM) and flower buds. Detected in young leaf primordium. Also expressed in mature flowers, but weakly expressed in mature stems and leaves.

The protein localises to the nucleus. Its function is as follows. Transcription activator that plays a role in the regulation of cell expansion in leaf and cotyledons tissues. Component of a network formed by miR396, the GRFs and their interacting factors (GIFs) acting in the regulation of meristem function, at least partially through the control of cell proliferation. This chain is Growth-regulating factor 2 (GRF2), found in Arabidopsis thaliana (Mouse-ear cress).